The following is a 296-amino-acid chain: Acetylglutamate kinase (296 aa).

Residues 69-70 (GG), R91, and N193 each bind substrate.

Belongs to the acetylglutamate kinase family. ArgB subfamily.

It is found in the cytoplasm. It catalyses the reaction N-acetyl-L-glutamate + ATP = N-acetyl-L-glutamyl 5-phosphate + ADP. The protein operates within amino-acid biosynthesis; L-arginine biosynthesis; N(2)-acetyl-L-ornithine from L-glutamate: step 2/4. In terms of biological role, catalyzes the ATP-dependent phosphorylation of N-acetyl-L-glutamate. This is Acetylglutamate kinase from Verminephrobacter eiseniae (strain EF01-2).